Reading from the N-terminus, the 337-residue chain is MPFSISKDTVSNQTTHVATAPASQRPDPVETKVEQEQGRPRLSSRDVVHAYVALTKPRIIELLLVTTLPVMFLASHGVPKLGLVIATMVGGLFAAASANVFNCVIDVDIDQKMRRTRRRPLPRHQVPRRSALIYGIILWIIATIILGFGANWLSAALALIANLFYVFVYSMLLKRRTWQNTIWGGIAGCFPPLIGWTAVTGSVGWEPLVLFFIVFWWTPPHTWALSFRYREDYEAAGVPMLPVVRDAPEVAIQILIYTVMTVAISLVLWPVAHMGWIYVVVAVVSGAVFIVEAAQLLRRANAGLRDALLKPMGLFHWSNTYLSLLFLAIAVDPLIHL.

Positions 1–17 (MPFSISKDTVSNQTTHV) are enriched in polar residues. Positions 1–41 (MPFSISKDTVSNQTTHVATAPASQRPDPVETKVEQEQGRPR) are disordered. Residues 27–41 (DPVETKVEQEQGRPR) show a composition bias toward basic and acidic residues. 8 helical membrane-spanning segments follow: residues 59-79 (IIEL…HGVP), 81-101 (LGLV…ANVF), 130-150 (SALI…GFGA), 153-173 (LSAA…SMLL), 196-216 (WTAV…IVFW), 250-270 (VAIQ…VLWP), 271-291 (VAHM…VFIV), and 311-331 (PMGL…AIAV).

Belongs to the UbiA prenyltransferase family. Protoheme IX farnesyltransferase subfamily.

Its subcellular location is the cell membrane. It carries out the reaction heme b + (2E,6E)-farnesyl diphosphate + H2O = Fe(II)-heme o + diphosphate. It functions in the pathway porphyrin-containing compound metabolism; heme O biosynthesis; heme O from protoheme: step 1/1. Converts heme B (protoheme IX) to heme O by substitution of the vinyl group on carbon 2 of heme B porphyrin ring with a hydroxyethyl farnesyl side group. In Cutibacterium acnes (strain DSM 16379 / KPA171202) (Propionibacterium acnes), this protein is Protoheme IX farnesyltransferase.